The following is a 593-amino-acid chain: NADH-quinone oxidoreductase subunit C/D (593 aa).

An NADH dehydrogenase I subunit C region spans residues 1 to 184; it reads MTADNAIFIP…DPYSLTLAKQ (184 aa). An NADH dehydrogenase I subunit D region spans residues 208-593; the sequence is DYMFLNLGPN…IDFVMADVDR (386 aa).

The protein in the N-terminal section; belongs to the complex I 30 kDa subunit family. It in the C-terminal section; belongs to the complex I 49 kDa subunit family. As to quaternary structure, NDH-1 is composed of 13 different subunits. Subunits NuoB, CD, E, F, and G constitute the peripheral sector of the complex.

Its subcellular location is the cell inner membrane. The catalysed reaction is a quinone + NADH + 5 H(+)(in) = a quinol + NAD(+) + 4 H(+)(out). Functionally, NDH-1 shuttles electrons from NADH, via FMN and iron-sulfur (Fe-S) centers, to quinones in the respiratory chain. The immediate electron acceptor for the enzyme in this species is believed to be ubiquinone. Couples the redox reaction to proton translocation (for every two electrons transferred, four hydrogen ions are translocated across the cytoplasmic membrane), and thus conserves the redox energy in a proton gradient. The polypeptide is NADH-quinone oxidoreductase subunit C/D (Pseudomonas putida (strain ATCC 47054 / DSM 6125 / CFBP 8728 / NCIMB 11950 / KT2440)).